Here is a 94-residue protein sequence, read N- to C-terminus: Putative FXYD domain-containing ion transport regulator 8 (94 aa).

Positions 1–18 (MEVVLIFVYSLLVPVVLA) are cleaved as a signal peptide. Over 19-34 (SAAKEKEIDPFHYNYQ) the chain is Extracellular. A helical membrane pass occupies residues 35 to 58 (TLRIGGLVFDVVLFLVPSCHLLSH). Residues 59-94 (RCKCSFNQKPQDPGDKEAQVENFITANAKEPQKAKN) are Cytoplasmic-facing. Positions 66-94 (QKPQDPGDKEAQVENFITANAKEPQKAKN) are disordered.

This sequence belongs to the FXYD family.

The protein resides in the membrane. The sequence is that of Putative FXYD domain-containing ion transport regulator 8 (FXYD6P3) from Homo sapiens (Human).